We begin with the raw amino-acid sequence, 177 residues long: Large ribosomal subunit protein uL6 (177 aa).

Belongs to the universal ribosomal protein uL6 family. As to quaternary structure, part of the 50S ribosomal subunit.

Its function is as follows. This protein binds to the 23S rRNA, and is important in its secondary structure. It is located near the subunit interface in the base of the L7/L12 stalk, and near the tRNA binding site of the peptidyltransferase center. The protein is Large ribosomal subunit protein uL6 of Afipia carboxidovorans (strain ATCC 49405 / DSM 1227 / KCTC 32145 / OM5) (Oligotropha carboxidovorans).